Here is a 118-residue protein sequence, read N- to C-terminus: MSCQQNQQQCQPPPKCIPKCPPKCLTPRCPPKCPPKCPPVSSCCSVSSGGCCGSSSGGSCGSSSGGCCSSGGGGCCLSHHRRRRSHCHRPQSSGCCSQPSGGSSCCGGGSGQHSGGCC.

Positions 87–118 (CHRPQSSGCCSQPSGGSSCCGGGSGQHSGGCC) are disordered. The span at 90-103 (PQSSGCCSQPSGGS) shows a compositional bias: low complexity. A compositionally biased stretch (gly residues) spans 104–118 (SCCGGGSGQHSGGCC).

It belongs to the LCE family. As to quaternary structure, interacts with CYSRT1; the interaction is direct. As to expression, skin-specific. Expression was readily detected in adult trunk skin, adult arm skin, fetal skin, penal skin, vulva, esophagus and tongue. Not expressed in the cervix, rectum, lung, colon, or placenta.

In terms of biological role, precursors of the cornified envelope of the stratum corneum. This is Late cornified envelope protein 1B (LCE1B) from Homo sapiens (Human).